The following is a 210-amino-acid chain: Uracil phosphoribosyltransferase (210 aa).

5-phospho-alpha-D-ribose 1-diphosphate is bound by residues R78, R103, and 130–138; that span reads DPMLATGGS. Uracil-binding positions include I193 and 198 to 200; that span reads GDA. D199 is a binding site for 5-phospho-alpha-D-ribose 1-diphosphate.

This sequence belongs to the UPRTase family. It depends on Mg(2+) as a cofactor.

The catalysed reaction is UMP + diphosphate = 5-phospho-alpha-D-ribose 1-diphosphate + uracil. It functions in the pathway pyrimidine metabolism; UMP biosynthesis via salvage pathway; UMP from uracil: step 1/1. Allosterically activated by GTP. Catalyzes the conversion of uracil and 5-phospho-alpha-D-ribose 1-diphosphate (PRPP) to UMP and diphosphate. In Laribacter hongkongensis (strain HLHK9), this protein is Uracil phosphoribosyltransferase.